We begin with the raw amino-acid sequence, 211 residues long: MSGTGLFLTFEGIDGSGKSTQARLLAETLRAAGHDVVLTREPGGSPGAEEIRRLVLEGDPDRWSAETEILLFTAARRDHLERTIEPALAAGRVVICDRFADSTRMYQGLSRGDLRQLVDQLHALMIGREPDLTLLVDMDPETGLSRAKGRQGSEERFEDFGPELQQRMRAGFLDLAREYAHRFRIIDGNRDMDSVAADVTEIVLTHLNRTR.

12–19 lines the ATP pocket; it reads GIDGSGKS.

Belongs to the thymidylate kinase family.

The enzyme catalyses dTMP + ATP = dTDP + ADP. Phosphorylation of dTMP to form dTDP in both de novo and salvage pathways of dTTP synthesis. The sequence is that of Thymidylate kinase from Ruegeria pomeroyi (strain ATCC 700808 / DSM 15171 / DSS-3) (Silicibacter pomeroyi).